A 209-amino-acid polypeptide reads, in one-letter code: Protein-L-isoaspartate O-methyltransferase (209 aa).

Serine 55 is a catalytic residue.

This sequence belongs to the methyltransferase superfamily. L-isoaspartyl/D-aspartyl protein methyltransferase family.

The protein resides in the cytoplasm. It catalyses the reaction [protein]-L-isoaspartate + S-adenosyl-L-methionine = [protein]-L-isoaspartate alpha-methyl ester + S-adenosyl-L-homocysteine. In terms of biological role, catalyzes the methyl esterification of L-isoaspartyl residues in peptides and proteins that result from spontaneous decomposition of normal L-aspartyl and L-asparaginyl residues. It plays a role in the repair and/or degradation of damaged proteins. This Anaeromyxobacter dehalogenans (strain 2CP-C) protein is Protein-L-isoaspartate O-methyltransferase.